The sequence spans 289 residues: 33 kDa chaperonin (289 aa).

Cystine bridges form between cysteine 235/cysteine 237 and cysteine 268/cysteine 271.

Belongs to the HSP33 family. In terms of processing, under oxidizing conditions two disulfide bonds are formed involving the reactive cysteines. Under reducing conditions zinc is bound to the reactive cysteines and the protein is inactive.

Its subcellular location is the cytoplasm. In terms of biological role, redox regulated molecular chaperone. Protects both thermally unfolding and oxidatively damaged proteins from irreversible aggregation. Plays an important role in the bacterial defense system toward oxidative stress. This Bacillus licheniformis (strain ATCC 14580 / DSM 13 / JCM 2505 / CCUG 7422 / NBRC 12200 / NCIMB 9375 / NCTC 10341 / NRRL NRS-1264 / Gibson 46) protein is 33 kDa chaperonin.